Here is a 209-residue protein sequence, read N- to C-terminus: MSISKAIAADLLEIKAVSLSPSQPFTWASGIKSPIYTDNRVTLAYPEVRSQIEGAFAELIKAEFPEVEVIAGTATAGIPHGAIIADYLKLPFAYIRSKPKDHGAGNQVEGRVTKGQKMVVVEDLISTGGSVLEAVAAAEREGADVLGVVAIFTYELEKANRKFADAGVKLATLTTYSELIEIAKETGYVTKEELELLKKFKENQETWQN.

Residues arginine 96, lysine 100, histidine 102, and 122-130 (EDLISTGGS) each bind 5-phospho-alpha-D-ribose 1-diphosphate. Serine 126 serves as a coordination point for orotate.

This sequence belongs to the purine/pyrimidine phosphoribosyltransferase family. PyrE subfamily. In terms of assembly, homodimer. The cofactor is Mg(2+).

It catalyses the reaction orotidine 5'-phosphate + diphosphate = orotate + 5-phospho-alpha-D-ribose 1-diphosphate. It participates in pyrimidine metabolism; UMP biosynthesis via de novo pathway; UMP from orotate: step 1/2. In terms of biological role, catalyzes the transfer of a ribosyl phosphate group from 5-phosphoribose 1-diphosphate to orotate, leading to the formation of orotidine monophosphate (OMP). This Lactococcus lactis subsp. lactis (strain IL1403) (Streptococcus lactis) protein is Orotate phosphoribosyltransferase.